Reading from the N-terminus, the 105-residue chain is UPF0145 protein Ping_0381 (105 aa).

This sequence belongs to the UPF0145 family.

This Psychromonas ingrahamii (strain DSM 17664 / CCUG 51855 / 37) protein is UPF0145 protein Ping_0381.